The following is a 250-amino-acid chain: Osmotin-like protein OSML15 (250 aa).

An N-terminal signal peptide occupies residues 1 to 21 (MSHLTTCLVFFLLAFVTYTNA). 8 disulfide bridges follow: Cys-31/Cys-226, Cys-73/Cys-83, Cys-88/Cys-94, Cys-142/Cys-214, Cys-147/Cys-197, Cys-155/Cys-165, Cys-169/Cys-178, and Cys-179/Cys-184.

Belongs to the thaumatin family.

In Solanum commersonii (Commerson's wild potato), this protein is Osmotin-like protein OSML15.